Reading from the N-terminus, the 293-residue chain is DOMON domain-containing protein FRRS1L (293 aa).

The signal sequence occupies residues 1 to 28 (MAGQPLRRPAWVPLLLRLLLAGIAACDA). Residues 29 to 60 (SPADDSAGPGGRGPRGRARGDAGADEAVPRHD) form a disordered region. The span at 46 to 60 (ARGDAGADEAVPRHD) shows a compositional bias: basic and acidic residues. Residues 119-234 (CDYFLSYRMI…WYYLFAWGPA (116 aa)) form the DOMON domain. Residues 271 to 291 (TFSSPFCLLLIVALTFYLLMG) traverse the membrane as a helical segment.

As to quaternary structure, component of the outer core of AMPAR complex. AMPAR complex consists of an inner core made of 4 pore-forming GluA/GRIA proteins (GRIA1, GRIA2, GRIA3 and GRIA4) and 4 major auxiliary subunits arranged in a twofold symmetry. One of the two pairs of distinct binding sites is occupied either by CNIH2, CNIH3 or CACNG2, CACNG3. The other harbors CACNG2, CACNG3, CACNG4, CACNG8 or GSG1L. This inner core of AMPAR complex is complemented by outer core constituents binding directly to the GluA/GRIA proteins at sites distinct from the interaction sites of the inner core constituents. Outer core constituents include at least PRRT1, PRRT2, CKAMP44/SHISA9, FRRS1L and NRN1. The proteins of the inner and outer core serve as a platform for other, more peripherally associated AMPAR constituents. Alone or in combination, these auxiliary subunits control the gating and pharmacology of the AMPAR complex and profoundly impact their biogenesis and protein processing. Expressed in the brain (at protein level). In embryos expression is evident in the ventral forebrain, but a lower level is seen in the remainder of the embryos. In the adult brain, expressed in the cortex, cerebellum, hippocampus and basal ganglia.

Its subcellular location is the cell membrane. The protein localises to the synapse. Functionally, important modulator of glutamate signaling pathway. This Mus musculus (Mouse) protein is DOMON domain-containing protein FRRS1L (Frrs1l).